The chain runs to 554 residues: Valerianol synthase TPS8 (554 aa).

Residues 288-292 carry the DDXXD motif motif; it reads QHSVG. Residues Asp307, Asp311, Asp452, Ser456, and Glu460 each coordinate Mg(2+).

It belongs to the terpene synthase family. Mg(2+) serves as cofactor.

The enzyme catalyses (2E,6E)-farnesyl diphosphate + H2O = valerianol + diphosphate. It participates in secondary metabolite biosynthesis; terpenoid biosynthesis. In terms of biological role, terpene synthase that catalyzes the biosynthesis of the terpene valerianol. The sequence is that of Valerianol synthase TPS8 from Camellia sinensis (Tea plant).